We begin with the raw amino-acid sequence, 107 residues long: Heme-degrading monooxygenase (107 aa).

An ABM domain is found at 2 to 93 (VIVANKTLIR…DYILGNEIEF (92 aa)). Asparagine 6 is a binding site for Fe cation. Histidine 76 contributes to the heme binding site.

Belongs to the antibiotic biosynthesis monooxygenase family. Heme-degrading monooxygenase IsdG subfamily. As to quaternary structure, homodimer.

The protein resides in the cytoplasm. It carries out the reaction heme b + 3 reduced [NADPH--hemoprotein reductase] + 3 O2 = biliverdin IXalpha + CO + Fe(2+) + 3 oxidized [NADPH--hemoprotein reductase] + 3 H2O + H(+). Functionally, allows bacterial pathogens to use the host heme as an iron source. Catalyzes the oxidative degradation of the heme macrocyclic porphyrin ring to the biliverdin in the presence of a suitable electron donor such as ascorbate or NADPH--cytochrome P450 reductase, with subsequent release of free iron. In Shouchella clausii (strain KSM-K16) (Alkalihalobacillus clausii), this protein is Heme-degrading monooxygenase.